A 387-amino-acid polypeptide reads, in one-letter code: Na(+)/H(+)-K(+) antiporter GerN (387 aa).

Transmembrane regions (helical) follow at residues 29 to 49 (PSVLGKLIVGIVIGPAVLGWI), 54 to 74 (LLTQLSNVGVILLMFMAGLET), 87 to 107 (LAVALGGIILPFVGGYVSGLV), 114 to 134 (NAVFLGLLLCATSVSISVQTL), 149 to 169 (LGAAVFDDILVVILLAFAMSF), 175 to 195 (VNLTMVILKKVVFFASIILIG), 219 to 239 (ALIICFSFAYFGELLGIAGII), 263 to 283 (PIAYAMFVPVFFVSIGMNITF), 290 to 310 (IWFILALTVIAVLTKLIGCGF), 324 to 344 (IIGAGMVSRGEVALIIAGTGL), and 347 to 367 (GLLAQDYFTAIVIVVILTTMI).

Belongs to the monovalent cation:proton antiporter 2 (CPA2) transporter (TC 2.A.37) family.

It localises to the membrane. Its function is as follows. Na(+)/H(+) antiporter that extrudes sodium in exchange for external protons. Can also use potassium as a coupling ion, without completely replacing H(+). This Na(+)/H(+)-K(+) antiport is much more rapid than Na(+)/H(+) antiport. Can also extrude lithium. Important for the inosine-dependent germination of spores. This chain is Na(+)/H(+)-K(+) antiporter GerN (gerN), found in Bacillus cereus.